A 234-amino-acid chain; its full sequence is BTB/POZ domain-containing protein KCTD5 (234 aa).

Alanine 2 is modified (N-acetylalanine). The BTB domain occupies 44 to 146 (KWVRLNVGGT…LVKDKIRERD (103 aa)). The tract at residues 211–234 (NSPHGPASEPSEKAKILQERGSRM) is disordered. Positions 220–234 (PSEKAKILQERGSRM) are enriched in basic and acidic residues.

As to quaternary structure, homopentamer. Interacts (via C-terminus) with GRASP55/GORASP2. Interacts with CUL3 and with ubiquitinated proteins. Interacts with CRY1.

It localises to the cytoplasm. The protein resides in the cytosol. Its subcellular location is the nucleus. Its interaction with CUL3 suggests that it may act as a substrate adapter in some E3 ligase complex. Does not affect the function of Kv channel Kv2.1/KCNB1, Kv1.2/KCNA2, Kv4.2/KCND2 and Kv3.4/KCNC4. This is BTB/POZ domain-containing protein KCTD5 (KCTD5) from Bos taurus (Bovine).